The sequence spans 300 residues: Porphobilinogen deaminase (300 aa).

S-(dipyrrolylmethanemethyl)cysteine is present on cysteine 242.

The protein belongs to the HMBS family. Monomer. Dipyrromethane serves as cofactor.

It carries out the reaction 4 porphobilinogen + H2O = hydroxymethylbilane + 4 NH4(+). The protein operates within porphyrin-containing compound metabolism; protoporphyrin-IX biosynthesis; coproporphyrinogen-III from 5-aminolevulinate: step 2/4. Its function is as follows. Tetrapolymerization of the monopyrrole PBG into the hydroxymethylbilane pre-uroporphyrinogen in several discrete steps. This chain is Porphobilinogen deaminase, found in Blochmanniella pennsylvanica (strain BPEN).